The chain runs to 433 residues: Pseudopaline synthase (433 aa).

The helical transmembrane segment at 7–27 (SLGNVLLVGLGAVAIQVALDL) threads the bilayer. NAD(+) is bound by residues 16-19 (LGAV), 39-40 (NH), and T154. The active-site Proton donor/acceptor is the H219. E364 contributes to the NAD(+) binding site.

Belongs to the staphylopine dehydrogenase family. As to quaternary structure, homodimer. Interacts with CntL.

Its subcellular location is the cell membrane. It catalyses the reaction pseudopaline + NAD(+) + H2O = (2S)-2-amino-4-{[(1S)-1-carboxy-2-(1H-imidazol-4-yl)ethyl]amino}butanoate + 2-oxoglutarate + NADH + H(+). In terms of biological role, catalyzes the NADH-dependent reductive condensation of alpha-ketoglutarate to the intermediate formed by the adjacently encoded enzyme CntL, namely (2S)-2-amino-4-{[(1S)-1-carboxy-2-(1H-imidazol-4-yl)ethyl]amino}butanoate, leading to the production of pseudopaline. This is the last step in the biosynthesis of the metallophore pseudopaline, which is involved in the acquisition of nickel and zinc, and thus enables bacterial growth inside the host, where metal access is limited. Therefore, this enzyme probably contributes to Pseudomonas virulence. Can use neither pyruvate nor NADPH in place of alpha-ketoglutarate and NADH, respectively. The sequence is that of Pseudopaline synthase from Pseudomonas aeruginosa (strain UCBPP-PA14).